Consider the following 570-residue polypeptide: MYCIEEKIEKALGIKEASLVLKNCNIVNVFSSEIIRGDLAIDGDTIIGIGKYKGKTEIDLSNKYVAPGFIDSHVHIESSMVSPKEFARAVISRGTTTIIVDPHEIANVCGMDGIKYMMEETKNMPLDVFFMLSSCVPATSFETSGAVLKAEDLKELIDSDRVLGLGEMMNYPGVLSREEEVLNKLKLAGSYNKIVDGHAPSVRGNELNAYNLAGIKTDHECSSIEEMNEKIRNGMYIAIREGSAAKNLDILIKGVNAKNERRIMFCADDRHPDDILKSGHMDNCVRRAIYNGIENTAAIRMASINAAECYKLERVGAIAPSYKADLVVLEDLKDVKVNMVIKSGEVVFKDNKHLKDMGSKSDITKVSNTVNIKKVSEENLELKLDTDVCSIISVALNSISTKNVKRKVNLSNGIFKCELNYGINKVAVIERHKKSGSIGIGLVENFGLKRGAIASTVAHDSHNIIVLGNNDEDMVKAVNEIERVGGGITISLDGKIIETLELEIAGLMSNKSMEFVAERVSKMINICHNTLGVNKDIQPFMTLAFLALPVIPEIRITDKGVFDVVNFKFL.

Belongs to the metallo-dependent hydrolases superfamily. Adenine deaminase family. The cofactor is Mn(2+).

The catalysed reaction is adenine + H2O + H(+) = hypoxanthine + NH4(+). In Clostridium acetobutylicum (strain ATCC 824 / DSM 792 / JCM 1419 / IAM 19013 / LMG 5710 / NBRC 13948 / NRRL B-527 / VKM B-1787 / 2291 / W), this protein is Adenine deaminase.